Consider the following 141-residue polypeptide: Nucleoside diphosphate kinase (141 aa).

ATP contacts are provided by Lys11, Phe59, Arg87, Thr93, Arg104, and Asn114. His117 serves as the catalytic Pros-phosphohistidine intermediate.

It belongs to the NDK family. As to quaternary structure, homotetramer. Mg(2+) serves as cofactor.

Its subcellular location is the cytoplasm. The enzyme catalyses a 2'-deoxyribonucleoside 5'-diphosphate + ATP = a 2'-deoxyribonucleoside 5'-triphosphate + ADP. It catalyses the reaction a ribonucleoside 5'-diphosphate + ATP = a ribonucleoside 5'-triphosphate + ADP. In terms of biological role, major role in the synthesis of nucleoside triphosphates other than ATP. The ATP gamma phosphate is transferred to the NDP beta phosphate via a ping-pong mechanism, using a phosphorylated active-site intermediate. The polypeptide is Nucleoside diphosphate kinase (Cupriavidus necator (strain ATCC 17699 / DSM 428 / KCTC 22496 / NCIMB 10442 / H16 / Stanier 337) (Ralstonia eutropha)).